Reading from the N-terminus, the 477-residue chain is Diacylglycerol O-acyltransferase 1-2 (477 aa).

A disordered region spans residues 1-48; it reads MAPPPSLAPDRGGGEPDDALRLRARAAAAAGDAPAPQQQQEQRHQEQQ. Residues 12 to 21 show a composition bias toward basic and acidic residues; that stretch reads GGGEPDDALR. A compositionally biased stretch (low complexity) spans 25–40; that stretch reads RAAAAAGDAPAPQQQQ. The next 7 helical transmembrane spans lie at 79–99, 123–143, 155–175, 182–202, 230–250, 263–283, and 319–339; these read HAGL…RLII, WPLL…LMVE, VVIL…VVVI, VLSG…LVSF, NIKW…TLCY, GWVV…GFII, and VWLC…AELL. An FYXDWWN motif motif is present at residues 346–352; the sequence is FYKDWWN. Transmembrane regions (helical) follow at residues 387–407, 409–429, and 442–462; these read GVAI…CVAV, CHIF…LVFL, and VGNM…CVLL. Residue H401 is part of the active site.

It belongs to the membrane-bound acyltransferase family. Sterol o-acyltransferase subfamily.

It localises to the endoplasmic reticulum membrane. It catalyses the reaction an acyl-CoA + a 1,2-diacyl-sn-glycerol = a triacyl-sn-glycerol + CoA. It participates in glycerolipid metabolism; triacylglycerol biosynthesis. Its function is as follows. Involved in triacylglycerol (TAG) synthesis. Catalyzes the acylation of the sn-3 hydroxy group of sn-1,2-diacylglycerol using acyl-CoA. In Oryza sativa subsp. japonica (Rice), this protein is Diacylglycerol O-acyltransferase 1-2.